The sequence spans 63 residues: Hirudin-P6 (63 aa).

Residues 1–3 are interaction with thrombin active site; it reads MRY. Intrachain disulfides connect C6–C14, C16–C28, and C22–C37. The span at 35-55 shows a compositional bias: basic and acidic residues; sequence KKCVEGEGTRKPQNEGQHDFD. Residues 35 to 63 are disordered; the sequence is KKCVEGEGTRKPQNEGQHDFDPIPEEYLS. Residue T43 is glycosylated (O-linked (GalNAc...) threonine). The tract at residues 53–63 is interaction with fibrinogen-binding exosite of thrombin; the sequence is DFDPIPEEYLS. A Sulfotyrosine modification is found at Y61.

Belongs to the protease inhibitor I14 (hirudin) family. O-linked glycan consists of Fuc-Gal-GalNAc trisaccharide.

It localises to the secreted. Functionally, hirudin is a potent thrombin-specific protease inhibitor. It forms a stable non-covalent complex with alpha-thrombin, thereby abolishing its ability to cleave fibrinogen. The protein is Hirudin-P6 of Hirudinaria manillensis (Asian medical leech).